Here is a 64-residue protein sequence, read N- to C-terminus: Large ribosomal subunit protein bL35 (64 aa).

Residues 27–47 are disordered; it reads MNGSHNLEKKNRKRSRRLHQA. The span at 36–45 shows a compositional bias: basic residues; sequence KNRKRSRRLH.

This sequence belongs to the bacterial ribosomal protein bL35 family.

This chain is Large ribosomal subunit protein bL35, found in Chlorobium phaeobacteroides (strain DSM 266 / SMG 266 / 2430).